The chain runs to 130 residues: MVRISVLNDCLKSICNASRRGKRQVIVRPSSKVVVKFLSVMQRHGYIGEFEIIDDHRGGKIIVQLNGRLNKTGVISPRFNVQHNRIEQWINYLLPSRGIGIIVLTTSSGILDHEEARRKNVGGKLLGYVY.

It belongs to the universal ribosomal protein uS8 family.

The chain is Small ribosomal subunit protein uS8 (rps22) from Agaricus bisporus (White button mushroom).